The chain runs to 165 residues: Large ribosomal subunit protein uL30 (165 aa).

This sequence belongs to the universal ribosomal protein uL30 family. In terms of assembly, part of the 50S ribosomal subunit.

This chain is Large ribosomal subunit protein uL30, found in Thermoplasma volcanium (strain ATCC 51530 / DSM 4299 / JCM 9571 / NBRC 15438 / GSS1).